Reading from the N-terminus, the 270-residue chain is Putative F-box protein At3g24700 (270 aa).

The F-box domain maps to 1 to 45; the sequence is MLTDLPLDLESEILSRVPATSLQRLKTTCKRWYALFRDPRFVKKN.

The chain is Putative F-box protein At3g24700 from Arabidopsis thaliana (Mouse-ear cress).